Reading from the N-terminus, the 119-residue chain is UPF0342 protein Athe_0692 (119 aa).

Belongs to the UPF0342 family.

In Caldicellulosiruptor bescii (strain ATCC BAA-1888 / DSM 6725 / KCTC 15123 / Z-1320) (Anaerocellum thermophilum), this protein is UPF0342 protein Athe_0692.